Here is a 311-residue protein sequence, read N- to C-terminus: Ribosomal RNA small subunit methyltransferase H (311 aa).

S-adenosyl-L-methionine-binding positions include 32-34, Asp52, Phe79, Asp100, and Gln107; that span reads AGH.

This sequence belongs to the methyltransferase superfamily. RsmH family.

It is found in the cytoplasm. It carries out the reaction cytidine(1402) in 16S rRNA + S-adenosyl-L-methionine = N(4)-methylcytidine(1402) in 16S rRNA + S-adenosyl-L-homocysteine + H(+). In terms of biological role, specifically methylates the N4 position of cytidine in position 1402 (C1402) of 16S rRNA. The polypeptide is Ribosomal RNA small subunit methyltransferase H (Staphylococcus carnosus (strain TM300)).